The sequence spans 20 residues: NPVDDHHDDHHDAPIVEHHD.

Residues N1 to D20 form a disordered region.

Homodimer. Glycosylated.

Its function is as follows. Appears to be a building block of the soluble organic matrix of the shell. The protein binds calcium. This Mytilus edulis (Blue mussel) protein is Major extrapallial fluid protein.